The following is a 330-amino-acid chain: Ketol-acid reductoisomerase (NADP(+)) (330 aa).

One can recognise a KARI N-terminal Rossmann domain in the interval 2–181 (AKVYYDNDVN…GATRAGVIET (180 aa)). Residues 25–28 (YGSQ), arginine 48, serine 52, and 82–85 (DEVQ) each bind NADP(+). Histidine 107 is a catalytic residue. Residue glycine 133 coordinates NADP(+). A KARI C-terminal knotted domain is found at 182–327 (TFKEETETDL…ADLRMMMPFI (146 aa)). Mg(2+)-binding residues include aspartate 190, glutamate 194, glutamate 226, and glutamate 230. Substrate is bound at residue serine 251.

It belongs to the ketol-acid reductoisomerase family. Mg(2+) serves as cofactor.

The catalysed reaction is (2R)-2,3-dihydroxy-3-methylbutanoate + NADP(+) = (2S)-2-acetolactate + NADPH + H(+). It carries out the reaction (2R,3R)-2,3-dihydroxy-3-methylpentanoate + NADP(+) = (S)-2-ethyl-2-hydroxy-3-oxobutanoate + NADPH + H(+). It functions in the pathway amino-acid biosynthesis; L-isoleucine biosynthesis; L-isoleucine from 2-oxobutanoate: step 2/4. Its pathway is amino-acid biosynthesis; L-valine biosynthesis; L-valine from pyruvate: step 2/4. Functionally, involved in the biosynthesis of branched-chain amino acids (BCAA). Catalyzes an alkyl-migration followed by a ketol-acid reduction of (S)-2-acetolactate (S2AL) to yield (R)-2,3-dihydroxy-isovalerate. In the isomerase reaction, S2AL is rearranged via a Mg-dependent methyl migration to produce 3-hydroxy-3-methyl-2-ketobutyrate (HMKB). In the reductase reaction, this 2-ketoacid undergoes a metal-dependent reduction by NADPH to yield (R)-2,3-dihydroxy-isovalerate. This is Ketol-acid reductoisomerase (NADP(+)) from Macrococcus caseolyticus (strain JCSC5402) (Macrococcoides caseolyticum).